A 647-amino-acid polypeptide reads, in one-letter code: DNA mismatch repair protein MutL (647 aa).

It belongs to the DNA mismatch repair MutL/HexB family.

Its function is as follows. This protein is involved in the repair of mismatches in DNA. It is required for dam-dependent methyl-directed DNA mismatch repair. May act as a 'molecular matchmaker', a protein that promotes the formation of a stable complex between two or more DNA-binding proteins in an ATP-dependent manner without itself being part of a final effector complex. In Koribacter versatilis (strain Ellin345), this protein is DNA mismatch repair protein MutL.